We begin with the raw amino-acid sequence, 545 residues long: DNA mismatch repair protein MutL (545 aa).

Residues 517–545 are disordered; that stretch reads RRSGARGGGEARPRPQEESFPEAPLPREP.

The protein belongs to the DNA mismatch repair MutL/HexB family.

This protein is involved in the repair of mismatches in DNA. It is required for dam-dependent methyl-directed DNA mismatch repair. May act as a 'molecular matchmaker', a protein that promotes the formation of a stable complex between two or more DNA-binding proteins in an ATP-dependent manner without itself being part of a final effector complex. This chain is DNA mismatch repair protein MutL, found in Thermus thermophilus (strain ATCC 27634 / DSM 579 / HB8).